Here is a 561-residue protein sequence, read N- to C-terminus: Potassium-transporting ATPase potassium-binding subunit (561 aa).

11 helical membrane-spanning segments follow: residues leucine 5–leucine 25, cysteine 60–leucine 80, valine 86–valine 106, glycine 131–isoleucine 151, isoleucine 177–serine 197, proline 247–threonine 267, leucine 281–alanine 301, glycine 376–glycine 396, alanine 415–leucine 435, leucine 489–glycine 509, and phenylalanine 531–leucine 551.

This sequence belongs to the KdpA family. In terms of assembly, the system is composed of three essential subunits: KdpA, KdpB and KdpC.

The protein localises to the cell membrane. In terms of biological role, part of the high-affinity ATP-driven potassium transport (or Kdp) system, which catalyzes the hydrolysis of ATP coupled with the electrogenic transport of potassium into the cytoplasm. This subunit binds the extracellular potassium ions and delivers the ions to the membrane domain of KdpB through an intramembrane tunnel. This chain is Potassium-transporting ATPase potassium-binding subunit, found in Nocardia farcinica (strain IFM 10152).